A 44-amino-acid polypeptide reads, in one-letter code: Photosystem I reaction center subunit IX (44 aa).

A helical transmembrane segment spans residues Tyr-7 to Ile-27.

It belongs to the PsaJ family.

It is found in the plastid. The protein resides in the chloroplast thylakoid membrane. May help in the organization of the PsaE and PsaF subunits. This is Photosystem I reaction center subunit IX from Phalaenopsis aphrodite subsp. formosana (Moth orchid).